The chain runs to 425 residues: MAVSARAGIVVTGTEVLTGRVQDRNGPWIADQLLELGVELAHITICGDRPADIEAQLRFMADQDLDLIITSGGLGPTADDMTVEVVARFCGRELILDAELEDTIANILKRLMARNPGFDPGNFDSVRAANQKQAMIPAGAQVINPVGTAPGLVVPGKPAVMVLPGPPRELQPMWHSAIQMPGAQEAIAGRTTYRQETIRMFGLPESGLAETLRSAETTIPDFGALEITTCLRRGEIEMVTRYEPGAADTYAQVARLLRDRHGDQIYSEDGSQVDDLVARLLADRRIATAESCTAGLLAARLTDRPGSSGYVMGGVVSYSNEAKAELLGVDPALIEMHGAVSEPVAQAMAAGALQRFGADTAVAITGIAGPGGGTEQKPVGTVCFCVLVGDGRNVTRTLRLPGNRSDIRERSTTVAMHLLRRALSE.

It belongs to the CinA family.

The protein is CinA-like protein of Mycobacterium marinum (strain ATCC BAA-535 / M).